The primary structure comprises 197 residues: Histocompatibility antigen 60c (197 aa).

Positions 1–17 (MALLLLILESCSAGTYA) are cleaved as a signal peptide. 3 N-linked (GlcNAc...) asparagine glycosylation sites follow: asparagine 51, asparagine 81, and asparagine 114. Serine 177 carries the GPI-anchor amidated serine lipid modification. Residues 178–197 (MACKSSPFDGLIMILLIYIL) constitute a propeptide, removed in mature form.

It belongs to the NKG2D ligand family. As to expression, expressed in skin, and weakly in large intestine.

The protein localises to the cell membrane. Its function is as follows. Ligand for the KLRK1 immunosurveillance receptor. Binding to KLRK1 stimulates cell lysis in vitro. In Mus musculus (Mouse), this protein is Histocompatibility antigen 60c.